The following is a 121-amino-acid chain: Large ribosomal subunit protein bL20 (121 aa).

It belongs to the bacterial ribosomal protein bL20 family.

Its function is as follows. Binds directly to 23S ribosomal RNA and is necessary for the in vitro assembly process of the 50S ribosomal subunit. It is not involved in the protein synthesizing functions of that subunit. This Petrotoga mobilis (strain DSM 10674 / SJ95) protein is Large ribosomal subunit protein bL20.